Consider the following 76-residue polypeptide: Small ribosomal subunit protein bS18 (76 aa).

This sequence belongs to the bacterial ribosomal protein bS18 family. Part of the 30S ribosomal subunit. Forms a tight heterodimer with protein bS6.

Functionally, binds as a heterodimer with protein bS6 to the central domain of the 16S rRNA, where it helps stabilize the platform of the 30S subunit. This is Small ribosomal subunit protein bS18 from Methylococcus capsulatus (strain ATCC 33009 / NCIMB 11132 / Bath).